A 246-amino-acid chain; its full sequence is Probable transcriptional regulatory protein PM0980 (246 aa).

The protein belongs to the TACO1 family.

Its subcellular location is the cytoplasm. The chain is Probable transcriptional regulatory protein PM0980 from Pasteurella multocida (strain Pm70).